We begin with the raw amino-acid sequence, 346 residues long: ATP-dependent (S)-NAD(P)H-hydrate dehydratase 2 (346 aa).

Residues 1-20 (MMVHSPLATGPHPTTHLEPT) are disordered. Residues 28 to 339 (LLRKAFQMIP…GYIGEAFEQV (312 aa)) enclose the YjeF C-terminal domain. Residues Gly135 and 188–194 (NHVEFQR) contribute to the (6S)-NADPHX site. ATP is bound by residues 228–232 (KGSID) and 248–257 (GSPKRCGGQG). Asp258 contacts (6S)-NADPHX.

This sequence belongs to the NnrD/CARKD family. It depends on Mg(2+) as a cofactor.

It is found in the cytoplasm. It carries out the reaction (6S)-NADHX + ATP = ADP + phosphate + NADH + H(+). The enzyme catalyses (6S)-NADPHX + ATP = ADP + phosphate + NADPH + H(+). Functionally, catalyzes the dehydration of the S-form of NAD(P)HX at the expense of ATP, which is converted to ADP. Together with NAD(P)HX epimerase, which catalyzes the epimerization of the S- and R-forms, the enzyme allows the repair of both epimers of NAD(P)HX, a damaged form of NAD(P)H that is a result of enzymatic or heat-dependent hydration. This chain is ATP-dependent (S)-NAD(P)H-hydrate dehydratase 2, found in Puccinia graminis f. sp. tritici (strain CRL 75-36-700-3 / race SCCL) (Black stem rust fungus).